The primary structure comprises 196 residues: Glycerol-3-phosphate acyltransferase 2 (196 aa).

Helical transmembrane passes span 2–22 (GWWLFPILGYFIGSIPFSYLI), 52–72 (VGGICLLLDALKGFFPVFITI), 80–100 (IVSLTAIATVLGHDFPIFMKF), 112–132 (IIFCLSWPTGLVFTLTWLVIV), and 137–156 (YASLGSLVALYVSALLGYLL).

It belongs to the PlsY family. Probably interacts with PlsX.

Its subcellular location is the cell inner membrane. It carries out the reaction an acyl phosphate + sn-glycerol 3-phosphate = a 1-acyl-sn-glycero-3-phosphate + phosphate. Its pathway is lipid metabolism; phospholipid metabolism. Catalyzes the transfer of an acyl group from acyl-phosphate (acyl-PO(4)) to glycerol-3-phosphate (G3P) to form lysophosphatidic acid (LPA). This enzyme utilizes acyl-phosphate as fatty acyl donor, but not acyl-CoA or acyl-ACP. This chain is Glycerol-3-phosphate acyltransferase 2, found in Thermotoga maritima (strain ATCC 43589 / DSM 3109 / JCM 10099 / NBRC 100826 / MSB8).